We begin with the raw amino-acid sequence, 331 residues long: Porphobilinogen deaminase (331 aa).

Cys248 is modified (S-(dipyrrolylmethanemethyl)cysteine). The disordered stretch occupies residues 307–331 (QLLQAPKQTGEPHDPDRHDKGTGRP). Residues 316–331 (GEPHDPDRHDKGTGRP) show a composition bias toward basic and acidic residues.

The protein belongs to the HMBS family. As to quaternary structure, monomer. It depends on dipyrromethane as a cofactor.

It catalyses the reaction 4 porphobilinogen + H2O = hydroxymethylbilane + 4 NH4(+). It functions in the pathway porphyrin-containing compound metabolism; protoporphyrin-IX biosynthesis; coproporphyrinogen-III from 5-aminolevulinate: step 2/4. Functionally, tetrapolymerization of the monopyrrole PBG into the hydroxymethylbilane pre-uroporphyrinogen in several discrete steps. This chain is Porphobilinogen deaminase, found in Acidothermus cellulolyticus (strain ATCC 43068 / DSM 8971 / 11B).